A 258-amino-acid polypeptide reads, in one-letter code: Bidirectional sugar transporter SWEET7 (258 aa).

Residues methionine 1–lysine 11 are Extracellular-facing. A helical membrane pass occupies residues isoleucine 12 to phenylalanine 32. Residues isoleucine 12–lysine 100 enclose the MtN3/slv 1 domain. Residues valine 33–proline 46 lie on the Cytoplasmic side of the membrane. A helical transmembrane segment spans residues isoleucine 47–valine 67. Residues histidine 68–leucine 73 are Extracellular-facing. A helical membrane pass occupies residues valine 74–valine 94. Residues tyrosine 95–arginine 102 are Cytoplasmic-facing. Residues leucine 103–valine 123 form a helical membrane-spanning segment. Over leucine 124 to threonine 134 the chain is Extracellular. The chain crosses the membrane as a helical span at residues methionine 135 to valine 155. The MtN3/slv 2 domain occupies serine 136–lysine 221. Residues methionine 156–glutamate 166 are Cytoplasmic-facing. Residues phenylalanine 167–alanine 187 form a helical membrane-spanning segment. The Extracellular segment spans residues leucine 188–proline 193. A helical membrane pass occupies residues phenylalanine 194–glycine 214. Residues alanine 215–valine 258 are Cytoplasmic-facing.

Belongs to the SWEET sugar transporter family. In terms of assembly, forms heterooligomers with SWEET8, SWEET11, SWEET13, SWEET16 and SWEET17.

It localises to the cell membrane. Functionally, mediates both low-affinity uptake and efflux of sugar across the plasma membrane. This Arabidopsis thaliana (Mouse-ear cress) protein is Bidirectional sugar transporter SWEET7.